The primary structure comprises 64 residues: U-myrmeciitoxin(01)-Mg4b (64 aa).

The N-terminal stretch at 1-25 is a signal peptide; sequence MGKIFFFVLMIAIIGSTFLIEEALG.

It belongs to the ant myrmeciitoxin-01 family. In terms of assembly, homodimer; disulfide-linked. Contains 2 intrachain disulfide bonds (per chain) and 1 interchain disulfide bond. As to expression, expressed by the venom gland.

Its subcellular location is the secreted. Functionally, may have antimicrobial properties, like most ant linear peptides. This chain is U-myrmeciitoxin(01)-Mg4b, found in Myrmecia gulosa (Red bulldog ant).